Consider the following 1072-residue polypeptide: Carbamoyl phosphate synthase large chain (1072 aa).

Residues 1-401 (MPKRLDINTI…SLLKAVRSLE (401 aa)) are carboxyphosphate synthetic domain. Arginine 129, arginine 169, glycine 175, glycine 176, lysine 208, isoleucine 210, glutamate 215, glycine 241, valine 242, histidine 243, glutamine 284, and glutamate 298 together coordinate ATP. In terms of domain architecture, ATP-grasp 1 spans 133 to 327 (RTLMQELNEP…IAKLAAKIAV (195 aa)). The Mg(2+) site is built by glutamine 284, glutamate 298, and asparagine 300. Mn(2+)-binding residues include glutamine 284, glutamate 298, and asparagine 300. Residues 402 to 546 (LGIYHLELDH…YSTYADENES (145 aa)) form an oligomerization domain region. Residues 547–929 (IVTDRKSVVV…ALYKGLVASG (383 aa)) form a carbamoyl phosphate synthetic domain region. Residues 671-861 (EAALTKLGIP…MANVATKVIL (191 aa)) enclose the ATP-grasp 2 domain. Arginine 707, arginine 746, glutamate 752, glycine 777, valine 778, histidine 779, serine 780, glutamine 820, and glutamate 832 together coordinate ATP. Mg(2+) contacts are provided by glutamine 820, glutamate 832, and asparagine 834. Residues glutamine 820, glutamate 832, and asparagine 834 each coordinate Mn(2+). The MGS-like domain maps to 930 to 1072 (INIPTHGSVI…QTKRHEVVHA (143 aa)). Residues 930 to 1072 (INIPTHGSVI…QTKRHEVVHA (143 aa)) form an allosteric domain region.

It belongs to the CarB family. In terms of assembly, composed of two chains; the small (or glutamine) chain promotes the hydrolysis of glutamine to ammonia, which is used by the large (or ammonia) chain to synthesize carbamoyl phosphate. Tetramer of heterodimers (alpha,beta)4. Mg(2+) serves as cofactor. The cofactor is Mn(2+).

It carries out the reaction hydrogencarbonate + L-glutamine + 2 ATP + H2O = carbamoyl phosphate + L-glutamate + 2 ADP + phosphate + 2 H(+). The enzyme catalyses hydrogencarbonate + NH4(+) + 2 ATP = carbamoyl phosphate + 2 ADP + phosphate + 2 H(+). It participates in amino-acid biosynthesis; L-arginine biosynthesis; carbamoyl phosphate from bicarbonate: step 1/1. It functions in the pathway pyrimidine metabolism; UMP biosynthesis via de novo pathway; (S)-dihydroorotate from bicarbonate: step 1/3. Its function is as follows. Large subunit of the glutamine-dependent carbamoyl phosphate synthetase (CPSase). CPSase catalyzes the formation of carbamoyl phosphate from the ammonia moiety of glutamine, carbonate, and phosphate donated by ATP, constituting the first step of 2 biosynthetic pathways, one leading to arginine and/or urea and the other to pyrimidine nucleotides. The large subunit (synthetase) binds the substrates ammonia (free or transferred from glutamine from the small subunit), hydrogencarbonate and ATP and carries out an ATP-coupled ligase reaction, activating hydrogencarbonate by forming carboxy phosphate which reacts with ammonia to form carbamoyl phosphate. The chain is Carbamoyl phosphate synthase large chain from Bacillus thuringiensis (strain Al Hakam).